Reading from the N-terminus, the 677-residue chain is Threonine--tRNA ligase (677 aa).

Positions 1-59 constitute a TGS domain; it reads MAQATISITVNGEAKEVEATTTGVELFAEDKNIIAVKINGENRDLYTPLNDGDTVDPIA. The tract at residues 255-561 is catalytic; that stretch reads DHRKLGAEMD…LLEHYAGAFP (307 aa). Positions 360, 411, and 538 each coordinate Zn(2+).

The protein belongs to the class-II aminoacyl-tRNA synthetase family. As to quaternary structure, homodimer. Requires Zn(2+) as cofactor.

Its subcellular location is the cytoplasm. It carries out the reaction tRNA(Thr) + L-threonine + ATP = L-threonyl-tRNA(Thr) + AMP + diphosphate + H(+). Catalyzes the attachment of threonine to tRNA(Thr) in a two-step reaction: L-threonine is first activated by ATP to form Thr-AMP and then transferred to the acceptor end of tRNA(Thr). Also edits incorrectly charged L-seryl-tRNA(Thr). The sequence is that of Threonine--tRNA ligase from Bifidobacterium longum (strain DJO10A).